The sequence spans 459 residues: Glycosyl hydrolase family 109 protein (459 aa).

A signal peptide (tat-type signal) is located at residues 1–45 (MAGDESRSNPFSRRTLLRTSAAAGAGLGVAGLSTGYGAAQPVRPA). NAD(+) contacts are provided by residues 70 to 71 (NR), aspartate 92, 141 to 144 (WEWH), 161 to 162 (EC), and asparagine 190. Substrate contacts are provided by residues tyrosine 219, arginine 238, 250–253 (YPTH), and tyrosine 332. Tyrosine 250 provides a ligand contact to NAD(+). The disordered stretch occupies residues 440-459 (DFTRGRWQTPHPGVDSPKPA).

The protein belongs to the Gfo/Idh/MocA family. Glycosyl hydrolase 109 subfamily. NAD(+) serves as cofactor. Post-translationally, predicted to be exported by the Tat system. The position of the signal peptide cleavage has not been experimentally proven.

In terms of biological role, glycosidase. This Saccharopolyspora erythraea (strain ATCC 11635 / DSM 40517 / JCM 4748 / NBRC 13426 / NCIMB 8594 / NRRL 2338) protein is Glycosyl hydrolase family 109 protein.